Reading from the N-terminus, the 1659-residue chain is Daxx-like protein (1659 aa).

Disordered regions lie at residues 1 to 25 and 265 to 336; these read MSASVICVDLSSESDEESPAKRRRL and QLQQ…VRSL. Residues 438–469 adopt a coiled-coil conformation; that stretch reads LGQLQQEQQKILGQLQQQKQQQQQQQKKILGQ. Low complexity-rich tracts occupy residues 506-520, 528-542, and 600-625; these read SVGQLQQQQPHQSQQ, KQQPQQQKKISVGQF, and GQLQRQTQQQQKTSAGQFQQQPQQQQ. 7 disordered regions span residues 506 to 542, 600 to 645, 658 to 713, 872 to 894, 924 to 952, 1023 to 1060, and 1536 to 1555; these read SVGQLQQQQPHQSQQKNSMVHVKQQPQQQKKISVGQF, GQLQ…TLAG, SAGQ…MPQK, TLPFRSSQRKTSEAPMTSTHVQG, LPPTTSITPQLTPTTTPPPAGPSAAVQQQ, VESPPTTPPTDKPEPERGPMTVEKSSIKPMATDKQSRA, and FKIADDGDDSEEESDSEDDD. A compositionally biased stretch (polar residues) spans 626–635; sequence KISAGQLQEH. Low complexity-rich tracts occupy residues 636 to 645 and 658 to 698; these read SQQQQKTLAG and SAGQ…QPQQ. 2 stretches are compositionally biased toward polar residues: residues 699 to 711 and 885 to 894; these read RTSAGLLQQQQMP and APMTSTHVQG. The tract at residues 870–1659 is necessary for interaction with His3.3A and His3.3B; it reads ARTLPFRSSQ…DQIIISDEES (790 aa). Over residues 924–937 the composition is skewed to low complexity; the sequence is LPPTTSITPQLTPT. Residues 1541–1555 are compositionally biased toward acidic residues; sequence DGDDSEEESDSEDDD.

In terms of assembly, interacts with p53 (via C-terminus). Interacts (via C-terminus) with His3.3A and His3.3B. Interacts with asf1. In terms of tissue distribution, ubiquitously expressed with higher levels in the head (at protein level). Expressed in the germ line, with prominent expression in primary spermatocytes and meiotic spermatocytes (at protein level). In ovaries, expressed in nurse cells and in the germinal vesicle of the ovarian follicle at stage 10 (at protein level).

Its subcellular location is the cytoplasm. The protein resides in the cytosol. It localises to the nucleus. The protein localises to the chromosome. Functionally, transcription regulator. Acts as a histone chaperone that facilitates deposition of histone H3.3. Has a role in chromatin remodeling together with asf1 and XNP. Has role in the transcriptional apoptotic response to oxidative and UV stress. The polypeptide is Daxx-like protein (Drosophila melanogaster (Fruit fly)).